We begin with the raw amino-acid sequence, 298 residues long: Bifunctional protein FolD (298 aa).

Residues 167–169 (GRS), serine 192, and isoleucine 233 each bind NADP(+).

Belongs to the tetrahydrofolate dehydrogenase/cyclohydrolase family. In terms of assembly, homodimer.

It catalyses the reaction (6R)-5,10-methylene-5,6,7,8-tetrahydrofolate + NADP(+) = (6R)-5,10-methenyltetrahydrofolate + NADPH. The catalysed reaction is (6R)-5,10-methenyltetrahydrofolate + H2O = (6R)-10-formyltetrahydrofolate + H(+). It functions in the pathway one-carbon metabolism; tetrahydrofolate interconversion. In terms of biological role, catalyzes the oxidation of 5,10-methylenetetrahydrofolate to 5,10-methenyltetrahydrofolate and then the hydrolysis of 5,10-methenyltetrahydrofolate to 10-formyltetrahydrofolate. The sequence is that of Bifunctional protein FolD from Caulobacter sp. (strain K31).